The sequence spans 682 residues: Glutamine--fructose-6-phosphate aminotransferase [isomerizing] 2 (682 aa).

Cys-2 (for GATase activity) is an active-site residue. Positions 2–288 (CGIFAYMNYR…DDDIAAVADG (287 aa)) constitute a Glutamine amidotransferase type-2 domain. At Ser-244 the chain carries Phosphoserine. SIS domains follow at residues 360–499 (HLKE…DRIS) and 531–672 (LALE…VDFP). Residues 377-378 (TS), 422-424 (SQS), Thr-427, and His-578 contribute to the substrate site.

It catalyses the reaction D-fructose 6-phosphate + L-glutamine = D-glucosamine 6-phosphate + L-glutamate. Its pathway is nucleotide-sugar biosynthesis; UDP-N-acetyl-alpha-D-glucosamine biosynthesis; alpha-D-glucosamine 6-phosphate from D-fructose 6-phosphate: step 1/1. Controls the flux of glucose into the hexosamine pathway. Most likely involved in regulating the availability of precursors for N- and O-linked glycosylation of proteins. This chain is Glutamine--fructose-6-phosphate aminotransferase [isomerizing] 2 (GFPT2), found in Bos taurus (Bovine).